Reading from the N-terminus, the 138-residue chain is Basic phospholipase A2 homolog promutoxin (138 aa).

Residues 1–16 (MRTLWIMAVLLLGVEG) form the signal peptide. Disulfide bonds link cysteine 42–cysteine 132, cysteine 44–cysteine 60, cysteine 59–cysteine 112, cysteine 65–cysteine 138, cysteine 66–cysteine 105, cysteine 73–cysteine 98, and cysteine 91–cysteine 103. Positions 122–133 (KKHRVTMKFLCK) are important for membrane-damaging activities in eukaryotes and bacteria; heparin-binding.

Belongs to the phospholipase A2 family. Group II subfamily. R49 sub-subfamily. Homodimer; non-covalently linked. As to expression, expressed by the venom gland.

The protein resides in the secreted. Its function is as follows. Snake venom phospholipase A2 homolog that lacks enzymatic activity. Exhibits potent myotoxicity causing myonecrosis and edema in the gastrocnemius muscle of mice. Is also able to stimulate the release of IL12 (IL12A-IL12B), TNF-alpha (TNF), IL6 and IL1-beta (IL1B) from human monocytes, and induce IL2, TNFalpha and IL6 release from T-cells. A model of myotoxic mechanism has been proposed: an apo Lys49-PLA2 is activated by the entrance of a hydrophobic molecule (e.g. fatty acid) at the hydrophobic channel of the protein leading to a reorientation of a monomer. This reorientation causes a transition between 'inactive' to 'active' states, causing alignment of C-terminal and membrane-docking sites (MDoS) side-by-side and putting the membrane-disruption sites (MDiS) in the same plane, exposed to solvent and in a symmetric position for both monomers. The MDoS region stabilizes the toxin on membrane by the interaction of charged residues with phospholipid head groups. Subsequently, the MDiS region destabilizes the membrane with penetration of hydrophobic residues. This insertion causes a disorganization of the membrane, allowing an uncontrolled influx of ions (i.e. calcium and sodium), and eventually triggering irreversible intracellular alterations and cell death. This Protobothrops mucrosquamatus (Taiwan habu) protein is Basic phospholipase A2 homolog promutoxin.